A 532-amino-acid chain; its full sequence is Putative L-lactate permease (532 aa).

A run of 14 helical transmembrane segments spans residues 23-43 (ALPS…VHLL), 56-76 (VVSA…AILF), 101-121 (VAQL…ASGF), 129-149 (APIL…ALIM), 152-172 (VPVS…ALKL), 180-200 (IGSI…LLAL), 213-233 (IVFI…IAQV), 234-254 (NYEF…VWAA), 274-294 (AGEV…LIVT), 346-366 (LLYV…IPFF), 387-407 (PFIA…GGEH), 420-440 (ISGS…SFFS), 462-482 (GISV…GNMV), and 508-528 (IIPM…LVPL).

Belongs to the lactate permease family.

The protein resides in the cell inner membrane. Functionally, may play a role in L-lactate transport. In Haemophilus influenzae (strain ATCC 51907 / DSM 11121 / KW20 / Rd), this protein is Putative L-lactate permease.